A 367-amino-acid chain; its full sequence is MNSNISSSPKILIMAGGTGGHVFPALAVAKYLAEKGWQIRWLGTADRMEARLVPQHGFDIEFIDIKGVRGNGLMRKLAAPFKIIRSIIQAKAVIDDFQPDVILGMGGFASGPGGVAGKLSGIPVVLHEQNAIPGLTNKLLSKIAKKVLCAFPNTFASNVANVEVVGNPIRQELIELGAQIKTPQADALRVLVVGGSLGAKVLNDVMPAVVAHLSKYHSLTVWHQVGKNNQATVKASYQQLGQSDSVNVAEFIDDMEAAYRWADVVVCRSGALTVSELAAVGLPSILVPYPHAVDDHQTVNASVLVDAGAGFLLPQTILNADNLAEKLQLFAENRQELAQMGHKARGVAVLDATQRVADICASFARKG.

UDP-N-acetyl-alpha-D-glucosamine contacts are provided by residues 18-20 (TGG), N130, R170, S196, I252, 271-276 (ALTVSE), and Q297.

Belongs to the glycosyltransferase 28 family. MurG subfamily.

The protein resides in the cell inner membrane. It carries out the reaction di-trans,octa-cis-undecaprenyl diphospho-N-acetyl-alpha-D-muramoyl-L-alanyl-D-glutamyl-meso-2,6-diaminopimeloyl-D-alanyl-D-alanine + UDP-N-acetyl-alpha-D-glucosamine = di-trans,octa-cis-undecaprenyl diphospho-[N-acetyl-alpha-D-glucosaminyl-(1-&gt;4)]-N-acetyl-alpha-D-muramoyl-L-alanyl-D-glutamyl-meso-2,6-diaminopimeloyl-D-alanyl-D-alanine + UDP + H(+). The protein operates within cell wall biogenesis; peptidoglycan biosynthesis. Cell wall formation. Catalyzes the transfer of a GlcNAc subunit on undecaprenyl-pyrophosphoryl-MurNAc-pentapeptide (lipid intermediate I) to form undecaprenyl-pyrophosphoryl-MurNAc-(pentapeptide)GlcNAc (lipid intermediate II). This Shewanella frigidimarina (strain NCIMB 400) protein is UDP-N-acetylglucosamine--N-acetylmuramyl-(pentapeptide) pyrophosphoryl-undecaprenol N-acetylglucosamine transferase.